The chain runs to 309 residues: Small ribosomal subunit protein uS7m (309 aa).

The interval 39 to 86 (DSTTSSRLPPRVQIQQQQQQRTQPYSTETTPPPNSNNGDLAGIEGQPP) is disordered. Over residues 51–61 (QIQQQQQQRTQ) the composition is skewed to low complexity.

The protein belongs to the universal ribosomal protein uS7 family. In terms of assembly, component of the mitochondrial small ribosomal subunit (mt-SSU). Mature N.crassa 74S mitochondrial ribosomes consist of a small (37S) and a large (54S) subunit. The 37S small subunit contains a 16S ribosomal RNA (16S mt-rRNA) and 32 different proteins. The 54S large subunit contains a 23S rRNA (23S mt-rRNA) and 42 different proteins.

It localises to the mitochondrion. In terms of biological role, component of the mitochondrial ribosome (mitoribosome), a dedicated translation machinery responsible for the synthesis of mitochondrial genome-encoded proteins, including at least some of the essential transmembrane subunits of the mitochondrial respiratory chain. The mitoribosomes are attached to the mitochondrial inner membrane and translation products are cotranslationally integrated into the membrane. The protein is Small ribosomal subunit protein uS7m (rsm7) of Neurospora crassa (strain ATCC 24698 / 74-OR23-1A / CBS 708.71 / DSM 1257 / FGSC 987).